The following is a 264-amino-acid chain: Thymidylate synthase (264 aa).

Position 21 (Arg21) interacts with dUMP. His51 provides a ligand contact to (6R)-5,10-methylene-5,6,7,8-tetrahydrofolate. A dUMP-binding site is contributed by 126 to 127 (RR). The Nucleophile role is filled by Cys146. Residues 166 to 169 (RSAD), Asn177, and 207 to 209 (HLY) contribute to the dUMP site. Asp169 contacts (6R)-5,10-methylene-5,6,7,8-tetrahydrofolate. Ala263 provides a ligand contact to (6R)-5,10-methylene-5,6,7,8-tetrahydrofolate.

Belongs to the thymidylate synthase family. Bacterial-type ThyA subfamily. Homodimer.

The protein resides in the cytoplasm. The catalysed reaction is dUMP + (6R)-5,10-methylene-5,6,7,8-tetrahydrofolate = 7,8-dihydrofolate + dTMP. Its pathway is pyrimidine metabolism; dTTP biosynthesis. In terms of biological role, catalyzes the reductive methylation of 2'-deoxyuridine-5'-monophosphate (dUMP) to 2'-deoxythymidine-5'-monophosphate (dTMP) while utilizing 5,10-methylenetetrahydrofolate (mTHF) as the methyl donor and reductant in the reaction, yielding dihydrofolate (DHF) as a by-product. This enzymatic reaction provides an intracellular de novo source of dTMP, an essential precursor for DNA biosynthesis. In Legionella pneumophila subsp. pneumophila (strain Philadelphia 1 / ATCC 33152 / DSM 7513), this protein is Thymidylate synthase.